Reading from the N-terminus, the 1162-residue chain is PAN2-PAN3 deadenylation complex catalytic subunit PAN2 (1162 aa).

4 WD repeats span residues 27–66 (AKEKSATKMAFDQDVNLIWVGDTYGRVSSYDPSYSLYTRH), 153–193 (NTVQ…VVKT), 196–233 (GHSCMVSSMDFRDHTLVTAGKSKRFNMMYPDQFVNVYD), and 300–339 (HPCQSVTQLQLSPSGDYIAFIEHDNNINMWSRSNGMTGFT). The linker stretch occupies residues 341–491 (TATTILEYPD…LMNYKPSNDR (151 aa)). Residues 401-443 (VPLPPKSSAASSSHTALSTSSDSRPNTARSGNPSSGGQKYRLL) form a disordered region. A compositionally biased stretch (low complexity) spans 407 to 423 (SSAASSSHTALSTSSDS). Positions 424 to 437 (RPNTARSGNPSSGG) are enriched in polar residues. The USP domain occupies 492–904 (EVPPAFTKLQ…TPEIAIYSDA (413 aa)). The Exonuclease domain maps to 956-1126 (VALDAEFVAL…IEDAYTALVL (171 aa)). A divalent metal cation-binding residues include Asp959, Glu961, Asp1068, and Asp1119.

It belongs to the peptidase C19 family. PAN2 subfamily. Forms a heterotrimer with an asymmetric homodimer of the regulatory subunit PAN3 to form the poly(A)-nuclease (PAN) deadenylation complex. A divalent metal cation is required as a cofactor.

Its subcellular location is the cytoplasm. It catalyses the reaction Exonucleolytic cleavage of poly(A) to 5'-AMP.. With respect to regulation, positively regulated by the regulatory subunit PAN3. In terms of biological role, catalytic subunit of the poly(A)-nuclease (PAN) deadenylation complex, one of two cytoplasmic mRNA deadenylases involved in mRNA turnover. PAN specifically shortens poly(A) tails of RNA and the activity is stimulated by poly(A)-binding protein PAB1. PAN deadenylation is followed by rapid degradation of the shortened mRNA tails by the CCR4-NOT complex. Deadenylated mRNAs are then degraded by two alternative mechanisms, namely exosome-mediated 3'-5' exonucleolytic degradation, or deadenylation-dependent mRNA decaping and subsequent 5'-3' exonucleolytic degradation by XRN1. May also be involved in post-transcriptional maturation of mRNA poly(A) tails. This chain is PAN2-PAN3 deadenylation complex catalytic subunit PAN2, found in Eremothecium gossypii (strain ATCC 10895 / CBS 109.51 / FGSC 9923 / NRRL Y-1056) (Yeast).